A 277-amino-acid chain; its full sequence is Elongation factor 1-delta (277 aa).

A2 carries the N-acetylalanine modification. K17 carries the post-translational modification N6-acetyllysine. Phosphoserine occurs at positions 37, 44, 60, 86, and 106. Position 107 is an N6-acetyllysine (K107). The segment at 113–171 is disordered; the sequence is SALEKSSPAHRATTPQTQHVSPMRQVEPPSRKAATATEDDEDDDIDLFGSDEEEDKEAA. N6-acetyllysine; alternate is present on K117. N6-succinyllysine; alternate is present on K117. S119 carries the post-translational modification Phosphoserine. Phosphothreonine is present on T129. Position 133 is a phosphoserine (S133). T147 carries the post-translational modification Phosphothreonine. Acidic residues predominate over residues 149–168; it reads TEDDEDDDIDLFGSDEEEDK. Phosphoserine; by CK2 is present on S162.

This sequence belongs to the EF-1-beta/EF-1-delta family. EF-1 is composed of 4 subunits: alpha, beta, delta, and gamma.

EF-1-beta and EF-1-delta stimulate the exchange of GDP bound to EF-1-alpha to GTP. This chain is Elongation factor 1-delta (EEF1D), found in Ovis aries (Sheep).